The chain runs to 484 residues: Sucrose-6-phosphate hydrolase (484 aa).

Substrate contacts are provided by residues 48–51 (LLND), Q67, 110–111 (YS), 168–169 (RD), and E223. The active site involves D51.

This sequence belongs to the glycosyl hydrolase 32 family.

It is found in the cytoplasm. It catalyses the reaction Hydrolysis of terminal non-reducing beta-D-fructofuranoside residues in beta-D-fructofuranosides.. Its pathway is glycan biosynthesis; sucrose metabolism. Its function is as follows. Enables the bacterium to metabolize sucrose as a sole carbon source. In Vibrio alginolyticus, this protein is Sucrose-6-phosphate hydrolase (scrB).